Reading from the N-terminus, the 927-residue chain is Small conductance calcium-activated potassium channel protein (927 aa).

Residues 1-31 (MSIQKLNDTTNSGYVSSEETDSLLVSSSNPS) are compositionally biased toward polar residues. Disordered regions lie at residues 1–131 (MSIQ…EDVE), 181–251 (LSLK…VKSA), and 296–336 (HLHQ…SSST). Residues 45–62 (SNSTNGPTTGASTSSSGS) are compositionally biased toward low complexity. Over residues 63–77 (VSGGGGGSGSGGGSA) the composition is skewed to gly residues. Composition is skewed to polar residues over residues 95–107 (TSTYLTSPQQSQH) and 200–214 (NLGTSSYQNLASSIP). Low complexity-rich tracts occupy residues 219–232 (SRCRACRNCSRRAS) and 296–308 (HLHQQQLQQSQQQ). Residues 314–336 (ITSSPTNGSRIIRQSSQPESSST) show a composition bias toward polar residues. The chain crosses the membrane as a helical span at residues 489–509 (ALVMGMFGIIVMVIENELSSA). A helical transmembrane segment spans residues 530–550 (TVILLGLIVAYHALEVQLFMI). A helical membrane pass occupies residues 569–589 (IGLELFICAIHPIPGEYYFQW). Residues 609-629 (VALSLPMFLRLYLICRVMLLH) form a helical membrane-spanning segment. A helical transmembrane segment spans residues 658–678 (LMTICPGTVLLVFMVSLWIIA). Residues 696-716 (LLNSMWLTAITFLCVGYGDIV) constitute an intramembrane region (pore-forming). Residues 724–744 (GITLTCGMVGAGCTALLVAVV) form a helical membrane-spanning segment. A calmodulin-binding region spans residues 763 to 839 (DTQLTKRLKN…ITDMAKTQNT (77 aa)).

The protein belongs to the potassium channel KCNN family. SK subfamily. Heterooligomer. The complex is composed of 4 channel subunits each of which binds to a calmodulin subunit which regulates the channel activity through calcium-binding.

The protein localises to the membrane. Forms a voltage-independent potassium channel activated by intracellular calcium. Activation is followed by membrane hyperpolarization. Thought to regulate neuronal excitability by contributing to the slow component of synaptic afterhyperpolarization. The channel is blocked by apamin. The polypeptide is Small conductance calcium-activated potassium channel protein (Drosophila melanogaster (Fruit fly)).